Here is a 156-residue protein sequence, read N- to C-terminus: Protein-export protein SecB (156 aa).

This sequence belongs to the SecB family. Homotetramer, a dimer of dimers. One homotetramer interacts with 1 SecA dimer.

The protein resides in the cytoplasm. Its function is as follows. One of the proteins required for the normal export of preproteins out of the cell cytoplasm. It is a molecular chaperone that binds to a subset of precursor proteins, maintaining them in a translocation-competent state. It also specifically binds to its receptor SecA. The sequence is that of Protein-export protein SecB from Aliivibrio fischeri (strain ATCC 700601 / ES114) (Vibrio fischeri).